Reading from the N-terminus, the 171-residue chain is Neudesin (171 aa).

An N-terminal signal peptide occupies residues 1 to 30; the sequence is MARPAPWWRLRLLAALVLALALVPVPSAWA. Residues 43–128 form the Cytochrome b5 heme-binding domain; it reads VRLFTEEELA…KELEALDDVF (86 aa). N6-acetyllysine is present on Lys-135.

Belongs to the cytochrome b5 family. MAPR subfamily. As to quaternary structure, interacts with PINK1 and PARK7. In terms of tissue distribution, in the embryo, expressed most abundantly in brain and spinal cord. Widely expressed in adult tissues including brain, heart, lung and kidney. In brain, expressed in neurons but not in glial cells. In the hypothalamus is expressed primarily in the paraventricular nucleus (PVN), with lower levels of expression in the arcuate nucleus (ARC).

It is found in the secreted. Its subcellular location is the extracellular space. The protein localises to the mitochondrion. The protein resides in the endoplasmic reticulum. In terms of biological role, acts as a neurotrophic factor in postnatal mature neurons, enhancing neuronal survival. Promotes cell proliferation and neurogenesis in undifferentiated neural pro-genitor cells at the embryonic stage and inhibits differentiation of astrocytes. Its neurotrophic activity is exerted via MAPK1/ERK2, MAPK3/ERK1 and AKT1/AKT pathways. Neurotrophic activity is enhanced by binding to heme. Also acts as an anorexigenic neurotrophic factor that contributes to energy balance. The sequence is that of Neudesin from Mus musculus (Mouse).